The primary structure comprises 495 residues: ATP synthase subunit beta, chloroplastic (495 aa).

172-179 contributes to the ATP binding site; the sequence is GGAGVGKT.

The protein belongs to the ATPase alpha/beta chains family. In terms of assembly, F-type ATPases have 2 components, CF(1) - the catalytic core - and CF(0) - the membrane proton channel. CF(1) has five subunits: alpha(3), beta(3), gamma(1), delta(1), epsilon(1). CF(0) has four main subunits: a(1), b(1), b'(1) and c(9-12).

Its subcellular location is the plastid. It localises to the chloroplast thylakoid membrane. The enzyme catalyses ATP + H2O + 4 H(+)(in) = ADP + phosphate + 5 H(+)(out). Its function is as follows. Produces ATP from ADP in the presence of a proton gradient across the membrane. The catalytic sites are hosted primarily by the beta subunits. This chain is ATP synthase subunit beta, chloroplastic, found in Beaucarnea recurvata (Elephant-foot tree).